Here is a 199-residue protein sequence, read N- to C-terminus: uncharacterized protein (199 aa).

A run of 7 helical transmembrane segments spans residues 10-32 (LTSQ…FIGY), 37-59 (VYSA…INYY), 63-80 (LIVI…FALI), 83-100 (LGLI…GVYL), 104-121 (YQVY…INLF), 126-148 (LTVL…MGIT), and 163-185 (FDAI…TGII).

The protein resides in the cell membrane. This is an uncharacterized protein from Archaeoglobus fulgidus (strain ATCC 49558 / DSM 4304 / JCM 9628 / NBRC 100126 / VC-16).